Here is a 341-residue protein sequence, read N- to C-terminus: Anthranilate phosphoribosyltransferase (341 aa).

Residues G79, 82–83 (GD), T87, 89–92 (NIST), 107–115 (KHGNRAASS), and A119 contribute to the 5-phospho-alpha-D-ribose 1-diphosphate site. Anthranilate is bound at residue G79. S91 is a Mg(2+) binding site. An anthranilate-binding site is contributed by N110. R165 serves as a coordination point for anthranilate. Mg(2+) is bound by residues D224 and E225.

It belongs to the anthranilate phosphoribosyltransferase family. Homodimer. Mg(2+) serves as cofactor.

The catalysed reaction is N-(5-phospho-beta-D-ribosyl)anthranilate + diphosphate = 5-phospho-alpha-D-ribose 1-diphosphate + anthranilate. Its pathway is amino-acid biosynthesis; L-tryptophan biosynthesis; L-tryptophan from chorismate: step 2/5. Its function is as follows. Catalyzes the transfer of the phosphoribosyl group of 5-phosphorylribose-1-pyrophosphate (PRPP) to anthranilate to yield N-(5'-phosphoribosyl)-anthranilate (PRA). The chain is Anthranilate phosphoribosyltransferase from Lacticaseibacillus paracasei (strain ATCC 334 / BCRC 17002 / CCUG 31169 / CIP 107868 / KCTC 3260 / NRRL B-441) (Lactobacillus paracasei).